We begin with the raw amino-acid sequence, 227 residues long: Orotidine 5'-phosphate decarboxylase (227 aa).

Substrate-binding positions include D12, K34, 61–70 (DLKLHDIPNT), T117, R178, Q187, G207, and R208. The active-site Proton donor is the K63.

The protein belongs to the OMP decarboxylase family. Type 1 subfamily. In terms of assembly, homodimer.

It catalyses the reaction orotidine 5'-phosphate + H(+) = UMP + CO2. The protein operates within pyrimidine metabolism; UMP biosynthesis via de novo pathway; UMP from orotate: step 2/2. Functionally, catalyzes the decarboxylation of orotidine 5'-monophosphate (OMP) to uridine 5'-monophosphate (UMP). The sequence is that of Orotidine 5'-phosphate decarboxylase from Anaeromyxobacter dehalogenans (strain 2CP-1 / ATCC BAA-258).